We begin with the raw amino-acid sequence, 245 residues long: Dehydrogenase/reductase SDR family member 6 (245 aa).

NAD(+) contacts are provided by residues 16–18, D37, and D58; that span reads QGI. R144 lines the substrate pocket. Y147 (proton acceptor) is an active-site residue. NAD(+) contacts are provided by residues K151 and 180-184; that span reads VDTPS. Substrate-binding residues include R188 and R205.

Belongs to the short-chain dehydrogenases/reductases (SDR) family. In terms of assembly, homotetramer.

Its subcellular location is the cytoplasm. The enzyme catalyses cis-4-hydroxy-L-proline + NAD(+) = 4-oxo-L-proline + NADH + H(+). It catalyses the reaction (R)-3-hydroxybutanoate + NAD(+) = acetoacetate + NADH + H(+). Its pathway is amino-acid metabolism. It participates in siderophore biosynthesis. NAD(H)-dependent dehydrogenase/reductase with a preference for cyclic substrates. Catalyzes stereoselective conversion of 4-oxo-L-proline to cis-4-hydroxy-L-proline, likely a detoxification mechanism for ketoprolines. Mediates the formation of 2,5-dihydroxybenzoate (2,5-DHBA), a siderophore that chelates free cytoplasmic iron and associates with LCN2, thereby regulating iron transport and homeostasis while protecting cells against free radical-induced oxidative stress. The iron-siderophore complex is imported into mitochondria, providing an iron source for mitochondrial metabolic processes in particular heme synthesis. May act as a 3-hydroxybutyrate dehydrogenase. This is Dehydrogenase/reductase SDR family member 6 (BDH2) from Bos taurus (Bovine).